A 506-amino-acid polypeptide reads, in one-letter code: Maturase K (506 aa).

It belongs to the intron maturase 2 family. MatK subfamily.

The protein localises to the plastid. The protein resides in the chloroplast. Its function is as follows. Usually encoded in the trnK tRNA gene intron. Probably assists in splicing its own and other chloroplast group II introns. This chain is Maturase K, found in Trifolium subterraneum (Subterranean clover).